We begin with the raw amino-acid sequence, 87 residues long: Small ribosomal subunit protein bS20 (87 aa).

This sequence belongs to the bacterial ribosomal protein bS20 family.

Its function is as follows. Binds directly to 16S ribosomal RNA. The protein is Small ribosomal subunit protein bS20 of Halothermothrix orenii (strain H 168 / OCM 544 / DSM 9562).